The primary structure comprises 198 residues: Regulation of enolase protein 1 (198 aa).

The protein localises to the cytoplasm. Functionally, functions in the galactose metabolic pathway via the GAL83 protein and that it may control the level of ENO1. In Saccharomyces cerevisiae (strain ATCC 204508 / S288c) (Baker's yeast), this protein is Regulation of enolase protein 1 (REE1).